We begin with the raw amino-acid sequence, 208 residues long: Coiled-coil domain-containing protein 25 (208 aa).

Residues 1–105 (MVFYFTSSSV…SNLKKTADMD (105 aa)) are Extracellular-facing. The tract at residues 21 to 25 (KDKYE) is DNA-binding. Position 23 is an N6-acetyllysine (Lys23). Residues 106–122 (VGQIGFHRQKDVKIVTV) traverse the membrane as a helical segment. A coiled-coil region spans residues 117–187 (VKIVTVEKKV…REMDELRSYS (71 aa)). The Cytoplasmic portion of the chain corresponds to 123–208 (EKKVNEILNR…QDGNDSDEFM (86 aa)). Residues 145 to 184 (EAEKECRDHEERNEKKAQIQEMKRREKEEMKKKREMDELR) show a composition bias toward basic and acidic residues. The tract at residues 145-208 (EAEKECRDHE…QDGNDSDEFM (64 aa)) is disordered. Phosphoserine is present on Ser204.

The protein belongs to the CCDC25 family. Interacts (via cytoplasmic region) with ILK.

The protein localises to the cell membrane. Its subcellular location is the endomembrane system. Functionally, transmembrane receptor that senses neutrophil extracellular traps (NETs) and triggers the ILK-PARVB pathway to enhance cell motility. NETs are mainly composed of DNA fibers and are released by neutrophils to bind pathogens during inflammation. Formation of NETs is also associated with cancer metastasis, NET-DNA acting as a chemotactic factor to attract cancer cells. Specifically binds NETs on its extracellular region, in particular the 8-OHdG-enriched DNA present in NETs, and recruits ILK, initiating the ILK-PARVB cascade to induce cytoskeleton rearrangement and directional migration of cells. The protein is Coiled-coil domain-containing protein 25 of Bos taurus (Bovine).